A 504-amino-acid polypeptide reads, in one-letter code: Zinc finger CCCH domain-containing protein 18 (504 aa).

Positions 40-69 (SNADLLEVHEELLAAIKDAEEGLLHLKRSR) form a coiled coil. The disordered stretch occupies residues 77-105 (IFPNQEPTSEAPEVAVDPPDDVEPEPLEP). Over residues 94 to 104 (PPDDVEPEPLE) the composition is skewed to acidic residues. The C3H1-type zinc-finger motif lies at 146 to 173 (SENMSMCKFFLQQRCRFGSNCRLSHGIV). A disordered region spans residues 230–276 (GSSARLPSDSLSISEYADESDEDGEGSSSDEGSDFSEDGDQEDESVH). 2 stretches are compositionally biased toward acidic residues: residues 245–254 (YADESDEDGE) and 260–272 (EGSD…DQED). A G-patch domain is found at 304–350 (TRGVASKMMAKMGYREGMGLGVSGQGMLDPIPVKVLPPKQSLDHAVA). 3 disordered regions span residues 351–390 (ASEV…EEER), 406–432 (AEGS…DRRS), and 482–504 (EATH…WLKF). A compositionally biased stretch (basic residues) spans 361–374 (GKKRSRGGKRKREK). 3 stretches are compositionally biased toward basic and acidic residues: residues 375-390 (KFAE…EEER), 413-432 (SKKD…DRRS), and 493-504 (ARKEKEKKWLKF). Positions 430 to 500 (RRSLLAYDDE…AVARKEKEKK (71 aa)) form a coiled coil.

This chain is Zinc finger CCCH domain-containing protein 18, found in Oryza sativa subsp. japonica (Rice).